The primary structure comprises 27 residues: AGSKVVGYFTEWGTYDRKYYVKNIEXS.

One can recognise a GH18 domain in the interval 3 to 27; the sequence is SKVVGYFTEWGTYDRKYYVKNIEXS.

The protein belongs to the glycosyl hydrolase 18 family. Chitinase class II subfamily. As to quaternary structure, homodimer.

It catalyses the reaction Random endo-hydrolysis of N-acetyl-beta-D-glucosaminide (1-&gt;4)-beta-linkages in chitin and chitodextrins.. Able to cleave chitin oligomers from N=3 to 6. The chain is Chitinase 47 kDa from Streptomyces olivaceoviridis (Streptomyces corchorusii).